The following is a 152-amino-acid chain: Outer membrane protein assembly factor BamE (152 aa).

The first 32 residues, 1 to 32 (MIDQNHDSEEQAQMQKLTRTVTLTVALTLVSG), serve as a signal peptide directing secretion. Cys-33 carries the N-palmitoyl cysteine lipid modification. Cys-33 carries S-diacylglycerol cysteine lipidation. A disordered region spans residues 114–152 (IDRHGDFSRPPSVADERGIGPTDSTNARGNLLNARPDDE).

Belongs to the BamE family. In terms of assembly, part of the Bam complex.

It is found in the cell outer membrane. Part of the outer membrane protein assembly complex, which is involved in assembly and insertion of beta-barrel proteins into the outer membrane. In Halomonas elongata (strain ATCC 33173 / DSM 2581 / NBRC 15536 / NCIMB 2198 / 1H9), this protein is Outer membrane protein assembly factor BamE.